The sequence spans 1229 residues: Phosphorylase b kinase regulatory subunit alpha, liver isoform (1229 aa).

Residues 625–646 show a composition bias toward acidic residues; sequence DSLLEDDEEQEEEEEDKFEDDY. The disordered stretch occupies residues 625 to 648; the sequence is DSLLEDDEEQEEEEEDKFEDDYNN. Residues 825 to 855 form a calmodulin-binding region; sequence LEELYIQAGACKEWGLIRYISGILRKRVEVL. A disordered region spans residues 1024 to 1050; it reads EIKQRCSSPSTPSGILSPVGPGPADGQ. A compositionally biased stretch (polar residues) spans 1028–1037; the sequence is RCSSPSTPSG. The segment at 1052–1092 is calmodulin-binding; the sequence is HWVERQGQWLRRRRLDGAINRVPVGFYQKVWKILQKCHGLS. C1226 carries the S-farnesyl cysteine lipid modification.

The protein belongs to the phosphorylase b kinase regulatory chain family. In terms of assembly, polymer of 16 chains, four each of alpha, beta, gamma, and delta. Alpha and beta are regulatory chains, gamma is the catalytic chain, and delta is calmodulin. In terms of processing, although the final Cys may be farnesylated, the terminal tripeptide is probably not removed, and the C-terminus is not methylated.

It is found in the cell membrane. It participates in glycan biosynthesis; glycogen metabolism. With respect to regulation, by phosphorylation of various serine residues and by calcium. Functionally, phosphorylase b kinase catalyzes the phosphorylation of serine in certain substrates, including troponin I. The alpha chain may bind calmodulin. The polypeptide is Phosphorylase b kinase regulatory subunit alpha, liver isoform (phka2) (Takifugu rubripes (Japanese pufferfish)).